The sequence spans 374 residues: Glutamate 5-kinase (374 aa).

Lysine 16 is a binding site for ATP. The substrate site is built by serine 56, aspartate 143, and asparagine 155. 175–176 (TD) serves as a coordination point for ATP. The 79-residue stretch at 282–360 (RGRVVLDAGA…SEIEAVLGYV (79 aa)) folds into the PUA domain.

This sequence belongs to the glutamate 5-kinase family.

It is found in the cytoplasm. The catalysed reaction is L-glutamate + ATP = L-glutamyl 5-phosphate + ADP. It participates in amino-acid biosynthesis; L-proline biosynthesis; L-glutamate 5-semialdehyde from L-glutamate: step 1/2. In terms of biological role, catalyzes the transfer of a phosphate group to glutamate to form L-glutamate 5-phosphate. This is Glutamate 5-kinase from Ralstonia pickettii (strain 12J).